The primary structure comprises 77 residues: MSQSETFEKVKKIVIEQLSVENPDTVTPEASFANDLQADSLDTVELVMALEEEFDIEIPDEAAEKITTVQAAVDXIN.

The Carrier domain occupies serine 4–asparagine 77. The residue at position 40 (serine 40) is an O-(pantetheine 4'-phosphoryl)serine.

The protein belongs to the acyl carrier protein (ACP) family. In terms of processing, 4'-phosphopantetheine is transferred from CoA to a specific serine of apo-ACP by AcpS. This modification is essential for activity because fatty acids are bound in thioester linkage to the sulfhydryl of the prosthetic group.

It localises to the cytoplasm. It functions in the pathway lipid metabolism; fatty acid biosynthesis. Carrier of the growing fatty acid chain in fatty acid biosynthesis. The polypeptide is Acyl carrier protein (Anabaena variabilis).